A 499-amino-acid chain; its full sequence is Dipeptide and tripeptide permease A (499 aa).

The Cytoplasmic portion of the chain corresponds to methionine 1 to arginine 34. A helical transmembrane segment spans residues phenylalanine 35–serine 55. Topologically, residues glutamate 56–serine 59 are periplasmic. A helical membrane pass occupies residues isoleucine 60 to leucine 80. Topologically, residues glycine 81–arginine 89 are cytoplasmic. Residues valine 90–histidine 110 traverse the membrane as a helical segment. Residue aspartate 111 is a topological domain, periplasmic. A helical membrane pass occupies residues alanine 112–asparagine 132. Topologically, residues proline 133–threonine 153 are cytoplasmic. A helical membrane pass occupies residues methionine 154–alanine 174. Topologically, residues glutamate 175–glycine 178 are periplasmic. A helical transmembrane segment spans residues tryptophan 179–phenylalanine 199. Residues cysteine 200–histidine 217 lie on the Cytoplasmic side of the membrane. A helical membrane pass occupies residues valine 218–leucine 238. At leucine 239–arginine 246 the chain is on the periplasmic side. The chain crosses the membrane as a helical span at residues leucine 247–methionine 267. Residues glutamine 268–lysine 274 are Cytoplasmic-facing. A helical transmembrane segment spans residues methionine 275–methionine 295. Residues proline 296–glutamine 320 are Periplasmic-facing. Residues phenylalanine 321–asparagine 341 traverse the membrane as a helical segment. Topologically, residues lysine 342–proline 350 are cytoplasmic. Residues phenylalanine 351–alanine 371 form a helical membrane-spanning segment. The Periplasmic portion of the chain corresponds to lysine 372 to asparagine 383. Residues tryptophan 384–leucine 404 traverse the membrane as a helical segment. Residues alanine 405–arginine 414 are Cytoplasmic-facing. A helical transmembrane segment spans residues leucine 415–glycine 435. Residues lysine 436–arginine 459 are Periplasmic-facing. Residues valine 460–proline 480 traverse the membrane as a helical segment. The Cytoplasmic segment spans residues leucine 481–alanine 499.

Belongs to the major facilitator superfamily. Proton-dependent oligopeptide transporter (POT/PTR) (TC 2.A.17) family. DtpA subfamily.

The protein resides in the cell inner membrane. In terms of biological role, proton-dependent permease that transports di- and tripeptides. This is Dipeptide and tripeptide permease A from Cronobacter turicensis (strain DSM 18703 / CCUG 55852 / LMG 23827 / z3032).